Reading from the N-terminus, the 199-residue chain is Recombination protein RecR (199 aa).

The C4-type zinc-finger motif lies at 58 to 73 (CKVCTNLTDQEVCNIC). The region spanning 81–176 (LLICVVEDPR…KVSRIAHGIP (96 aa)) is the Toprim domain.

This sequence belongs to the RecR family.

In terms of biological role, may play a role in DNA repair. It seems to be involved in an RecBC-independent recombinational process of DNA repair. It may act with RecF and RecO. This Alkaliphilus oremlandii (strain OhILAs) (Clostridium oremlandii (strain OhILAs)) protein is Recombination protein RecR.